The sequence spans 450 residues: Glutathione reductase (450 aa).

S14, G15, E34, T41, C42, K50, and A115 together coordinate FAD. S14 is a glutathione binding site. C42 and C47 are joined by a disulfide. NADP(+) is bound by residues A175, I178, E181, R198, R204, and G262. Residue D303 participates in FAD binding. D309 contacts NADP(+). T311 contacts FAD. R319 serves as a coordination point for glutathione. Residue V342 participates in NADP(+) binding. H439 lines the FAD pocket. The active-site Proton acceptor is the H439.

The protein belongs to the class-I pyridine nucleotide-disulfide oxidoreductase family. As to quaternary structure, homodimer. FAD serves as cofactor.

The protein localises to the cytoplasm. It catalyses the reaction 2 glutathione + NADP(+) = glutathione disulfide + NADPH + H(+). In terms of biological role, catalyzes the reduction of glutathione disulfide (GSSG) to reduced glutathione (GSH). Constitutes the major mechanism to maintain a high GSH:GSSG ratio in the cytosol. This is Glutathione reductase (gor) from Streptococcus thermophilus.